Here is a 160-residue protein sequence, read N- to C-terminus: Phosphopantetheine adenylyltransferase (160 aa).

S9 contributes to the substrate binding site. Residues 9-10 (SF) and H17 each bind ATP. Substrate contacts are provided by K41, L73, and K87. Residues 88 to 90 (GLR), E98, and 123 to 129 (YGYLSSS) contribute to the ATP site.

Belongs to the bacterial CoaD family. Homohexamer. Mg(2+) is required as a cofactor.

It localises to the cytoplasm. It catalyses the reaction (R)-4'-phosphopantetheine + ATP + H(+) = 3'-dephospho-CoA + diphosphate. It participates in cofactor biosynthesis; coenzyme A biosynthesis; CoA from (R)-pantothenate: step 4/5. In terms of biological role, reversibly transfers an adenylyl group from ATP to 4'-phosphopantetheine, yielding dephospho-CoA (dPCoA) and pyrophosphate. This is Phosphopantetheine adenylyltransferase from Caldanaerobacter subterraneus subsp. tengcongensis (strain DSM 15242 / JCM 11007 / NBRC 100824 / MB4) (Thermoanaerobacter tengcongensis).